Here is a 256-residue protein sequence, read N- to C-terminus: Leucyl/phenylalanyl-tRNA--protein transferase (256 aa).

Residues 232 to 256 form a disordered region; that stretch reads DGCTGASRHGPGADMRRGDMSREST. The segment covering 245–256 has biased composition (basic and acidic residues); the sequence is DMRRGDMSREST.

This sequence belongs to the L/F-transferase family.

It localises to the cytoplasm. The catalysed reaction is N-terminal L-lysyl-[protein] + L-leucyl-tRNA(Leu) = N-terminal L-leucyl-L-lysyl-[protein] + tRNA(Leu) + H(+). It catalyses the reaction N-terminal L-arginyl-[protein] + L-leucyl-tRNA(Leu) = N-terminal L-leucyl-L-arginyl-[protein] + tRNA(Leu) + H(+). The enzyme catalyses L-phenylalanyl-tRNA(Phe) + an N-terminal L-alpha-aminoacyl-[protein] = an N-terminal L-phenylalanyl-L-alpha-aminoacyl-[protein] + tRNA(Phe). Its function is as follows. Functions in the N-end rule pathway of protein degradation where it conjugates Leu, Phe and, less efficiently, Met from aminoacyl-tRNAs to the N-termini of proteins containing an N-terminal arginine or lysine. This is Leucyl/phenylalanyl-tRNA--protein transferase from Chromohalobacter salexigens (strain ATCC BAA-138 / DSM 3043 / CIP 106854 / NCIMB 13768 / 1H11).